The following is a 174-amino-acid chain: Sarcoplasmic calcium-binding protein (174 aa).

The residue at position 1 (Ser-1) is an N-acetylserine. 4 EF-hand domains span residues 3–38 (LWVQ…FAKE), 55–90 (GVWD…EAKS), 91–126 (VVEG…LGLD), and 127–160 (KTMA…FFMN). Residues Asp-16, Asp-18, Asp-20, and Asp-27 each contribute to the Ca(2+) site. Asp-104, Asn-106, Asp-108, Asn-110, Glu-115, Asp-138, Asn-140, Asp-142, and Glu-149 together coordinate Ca(2+).

Its function is as follows. Like parvalbumins, SCPs seem to be more abundant in fast contracting muscles, but no functional relationship can be established from this distribution. This Hediste diversicolor (Sandworm) protein is Sarcoplasmic calcium-binding protein.